A 313-amino-acid polypeptide reads, in one-letter code: Protein FixB (313 aa).

Residue L255–D283 participates in FAD binding.

This sequence belongs to the ETF alpha-subunit/FixB family. In terms of assembly, heterodimer of FixA and FixB.

The protein operates within amine and polyamine metabolism; carnitine metabolism. In terms of biological role, required for anaerobic carnitine reduction. May bring reductant to CaiA. The polypeptide is Protein FixB (Escherichia coli O8 (strain IAI1)).